Consider the following 306-residue polypeptide: D-alanine--D-alanine ligase (306 aa).

Residues 102 to 300 (KIIAANAGVC…YGDIVQWMVE (199 aa)) form the ATP-grasp domain. 128-183 (PMEPPYVIKPVCEGSSFGVVIVQENEAVPPHNIGGSEWGYADEVMVEKYIPGRELT) provides a ligand contact to ATP. Mg(2+) contacts are provided by aspartate 253, glutamate 267, and asparagine 269.

This sequence belongs to the D-alanine--D-alanine ligase family. The cofactor is Mg(2+). Mn(2+) serves as cofactor.

It localises to the cytoplasm. It carries out the reaction 2 D-alanine + ATP = D-alanyl-D-alanine + ADP + phosphate + H(+). Its pathway is cell wall biogenesis; peptidoglycan biosynthesis. Functionally, cell wall formation. The sequence is that of D-alanine--D-alanine ligase from Bartonella tribocorum (strain CIP 105476 / IBS 506).